The primary structure comprises 684 residues: Phenoloxidase 2 (684 aa).

The propeptide occupies 1-50 (MADKKNLLLLFDHPTEPVFMDKGKRVTVFDVPDSFLTDRYRPISNEVQSR). Cu cation-binding residues include H208, H212, and H238. Catalysis depends on E350, which acts as the Proton acceptor. 3 residues coordinate Cu cation: H365, H369, and H405. Residues N448 and N492 are each glycosylated (N-linked (GlcNAc...) asparagine). Intrachain disulfides connect C581-C623 and C583-C630. N-linked (GlcNAc...) asparagine glycosylation is found at N665 and N677.

Belongs to the tyrosinase family. Requires Cu(2+) as cofactor. Upon activation, a trypsin type protease cleaves prophenol oxidase to yield the active enzyme.

Its subcellular location is the secreted. It carries out the reaction 2 L-dopa + O2 = 2 L-dopaquinone + 2 H2O. It catalyses the reaction L-tyrosine + O2 = L-dopaquinone + H2O. Functionally, this is a copper-containing oxidase that functions in the formation of pigments such as melanins and other polyphenolic compounds. Catalyzes the rate-limiting conversions of tyrosine to DOPA, DOPA to DOPA-quinone and possibly 5,6 dihydroxyindole to indole-5'6 quinonee. The polypeptide is Phenoloxidase 2 (PPO2) (Drosophila melanogaster (Fruit fly)).